A 72-amino-acid chain; its full sequence is Translation initiation factor IF-1 1 (72 aa).

The region spanning 1-72 (MAKDDVIQMQ…SRARIVFRAK (72 aa)) is the S1-like domain.

The protein belongs to the IF-1 family. Component of the 30S ribosomal translation pre-initiation complex which assembles on the 30S ribosome in the order IF-2 and IF-3, IF-1 and N-formylmethionyl-tRNA(fMet); mRNA recruitment can occur at any time during PIC assembly.

It is found in the cytoplasm. Its function is as follows. One of the essential components for the initiation of protein synthesis. Stabilizes the binding of IF-2 and IF-3 on the 30S subunit to which N-formylmethionyl-tRNA(fMet) subsequently binds. Helps modulate mRNA selection, yielding the 30S pre-initiation complex (PIC). Upon addition of the 50S ribosomal subunit IF-1, IF-2 and IF-3 are released leaving the mature 70S translation initiation complex. The chain is Translation initiation factor IF-1 1 from Ralstonia nicotianae (strain ATCC BAA-1114 / GMI1000) (Ralstonia solanacearum).